An 86-amino-acid polypeptide reads, in one-letter code: Putative sodium channel toxin Ts17 (86 aa).

Residues 1 to 19 form the signal peptide; that stretch reads MNYFIFLVVACLLTAGTEG. In terms of domain architecture, LCN-type CS-alpha/beta spans 21–82; the sequence is KDGYPVEGDN…EPTKTSGRCK (62 aa). Intrachain disulfides connect Cys-31-Cys-81, Cys-35-Cys-57, Cys-43-Cys-64, and Cys-47-Cys-66. At Pro-83 the chain carries Proline amide.

Belongs to the long (4 C-C) scorpion toxin superfamily. Sodium channel inhibitor family. Alpha subfamily. In terms of tissue distribution, expressed by the venom gland.

It is found in the secreted. Alpha toxins bind voltage-independently at site-3 of sodium channels (Nav) and inhibit the inactivation of the activated channels, thereby blocking neuronal transmission. This is Putative sodium channel toxin Ts17 from Tityus serrulatus (Brazilian scorpion).